The sequence spans 180 residues: Magnetosome protein MamS (180 aa).

Topologically, residues 1-21 (MDFRPDQVVARIRGAVEGALT) are cytoplasmic. The chain crosses the membrane as a helical span at residues 22–42 (AQSVLGIGGALVLILVVIALL). At 43 to 180 (PDRFTRGEGK…EGLALWMTVQ (138 aa)) the chain is on the lumenal side.

The protein belongs to the magnetosome MamS family.

Its subcellular location is the magnetosome membrane. Functionally, may play a role in magnetite crystal growth and size. This is Magnetosome protein MamS from Magnetospirillum gryphiswaldense (strain DSM 6361 / JCM 21280 / NBRC 15271 / MSR-1).